The sequence spans 325 residues: E3 ubiquitin-protein ligase EL5 (325 aa).

The interval 1–29 (MVRGVEQGGPAMDESSSSSSPSPVSAPAG) is disordered. The span at 15–28 (SSSSSSPSPVSAPA) shows a compositional bias: low complexity. The chain crosses the membrane as a helical span at residues 38 to 58 (IATVAAVLIVFAALTLAFVLL). A disordered region spans residues 70-105 (TTTSTSGRGRRPRPRRRSGSGGDGGTGGGVDPEVLR). Basic residues predominate over residues 77–87 (RGRRPRPRRRS). A compositionally biased stretch (gly residues) spans 88–99 (GSGGDGGTGGGV). The RING-type; atypical zinc-finger motif lies at 134 to 176 (CAVCLAELEDGEEARFLPRCGHGFHAECVDMWLGSHSTCPLCR). Disordered stretches follow at residues 267 to 289 (GAAG…GDVE) and 303 to 325 (AATP…HVRN). Low complexity predominate over residues 268 to 281 (AAGSTSSCSCATGG).

The protein localises to the cell membrane. The enzyme catalyses S-ubiquitinyl-[E2 ubiquitin-conjugating enzyme]-L-cysteine + [acceptor protein]-L-lysine = [E2 ubiquitin-conjugating enzyme]-L-cysteine + N(6)-ubiquitinyl-[acceptor protein]-L-lysine.. It participates in protein modification; protein ubiquitination. Functionally, functions as an E3 ubiquitin-protein ligase in cooperation with the E2 ubiquitin conjugating enzymes UBC5A and UBC5B. Involved in root development. Required for the maintenance of cell viability after the initiation of root primordial formation. May mediate the degradation of cytotoxic proteins produced in root cells after the actions of auxin, cytokinin and jasmonic acid. Mediates 'Lys-48'-linked polyubiquitination of MBP in vitro. In Oryza sativa subsp. japonica (Rice), this protein is E3 ubiquitin-protein ligase EL5 (EL5.1).